Consider the following 464-residue polypeptide: Multifunctional dye peroxidase DyP2 (464 aa).

Aspartate 203 acts as the Proton acceptor in catalysis. Mn(2+) is bound by residues glutamate 258, glutamate 273, and glutamate 284. Histidine 321 contributes to the heme binding site.

The protein belongs to the DyP-type peroxidase family. As to quaternary structure, exists both as a monomeric and oligomeric species in solution; the monomeric form contains no bound heme cofactor and is inactive. It depends on heme b as a cofactor. Mn(2+) is required as a cofactor.

It localises to the secreted. The enzyme catalyses 1-(4-hydroxy-3-methoxyphenyl)-2-(2-methoxyphenoxy)propane-1,3-diol + H2O2 = guaiacol + vanillin + glycolaldehyde + H2O. It catalyses the reaction 2 Mn(2+) + H2O2 + 2 H(+) = 2 Mn(3+) + 2 H2O. It carries out the reaction 2 a phenolic donor + H2O2 = 2 a phenolic radical donor + 2 H2O. The catalysed reaction is Reactive Blue 5 + 2 H2O2 = 2,2'-disulfonyl azobenzene + 3-[(4-amino-6-chloro-1,3,5-triazin-2-yl)amino]benzenesulfonate + phthalate + 2 H2O + 2 H(+). In terms of biological role, displays both high peroxidase and manganese peroxidase activity. Is likely involved in lignin degradation. Also has a Mn-dependent oxidase mode of action that expands its substrate scope in vitro; is thus able to catalyze the O(2)- and Mn-dependent oxidative decarboxylation of 4-methoxymandelate to anisaldehyde. The protein is Multifunctional dye peroxidase DyP2 of Amycolatopsis sp. (strain ATCC 39116 / 75iv2).